We begin with the raw amino-acid sequence, 1578 residues long: Pentafunctional AROM polypeptide (1578 aa).

Residues 1–393 (MSVELAKVSI…YGTSAHVVSD (393 aa)) are 3-dehydroquinate synthase. Residues 44-46 (DTN), 79-82 (EAHK), 110-112 (GGV), and Asp-115 contribute to the NAD(+) site. Arg-126 serves as a coordination point for 7-phospho-2-dehydro-3-deoxy-D-arabino-heptonate. Residue 135–136 (TS) participates in NAD(+) binding. The 7-phospho-2-dehydro-3-deoxy-D-arabino-heptonate site is built by Asp-142 and Lys-148. Lys-157 contacts NAD(+). Asn-158 is a 7-phospho-2-dehydro-3-deoxy-D-arabino-heptonate binding site. NAD(+) contacts are provided by residues 175–178 (WLET) and Asn-186. Residue Glu-190 participates in Zn(2+) binding. 7-phospho-2-dehydro-3-deoxy-D-arabino-heptonate-binding positions include 190–193 (EVIK) and Lys-259. Residue Glu-269 is the Proton acceptor; for 3-dehydroquinate synthase activity of the active site. 7-phospho-2-dehydro-3-deoxy-D-arabino-heptonate is bound by residues 273-277 (RNLLN) and His-280. His-280 provides a ligand contact to Zn(2+). His-284 functions as the Proton acceptor; for 3-dehydroquinate synthase activity in the catalytic mechanism. Residues His-296 and Lys-365 each contribute to the 7-phospho-2-dehydro-3-deoxy-D-arabino-heptonate site. Residue His-296 participates in Zn(2+) binding. An EPSP synthase region spans residues 406–863 (VHPFNNIPEG…WDVLHSQLGA (458 aa)). Catalysis depends on Cys-845, which acts as the For EPSP synthase activity. A shikimate kinase region spans residues 882-1071 (VVIIGMRAAG…VPSRRSAFVC (190 aa)). 886-893 (GMRAAGKS) is an ATP binding site. The 3-dehydroquinase stretch occupies residues 1072–1284 (LTFEDLSDHL…AAPGQLTLAE (213 aa)). Catalysis depends on His-1189, which acts as the Proton acceptor; for 3-dehydroquinate dehydratase activity. The active-site Schiff-base intermediate with substrate; for 3-dehydroquinate dehydratase activity is the Lys-1218. A shikimate dehydrogenase region spans residues 1297–1578 (AKKFFVIGSP…KAIFDAVTQE (282 aa)).

It in the N-terminal section; belongs to the sugar phosphate cyclases superfamily. Dehydroquinate synthase family. The protein in the 2nd section; belongs to the EPSP synthase family. In the 3rd section; belongs to the shikimate kinase family. This sequence in the 4th section; belongs to the type-I 3-dehydroquinase family. It in the C-terminal section; belongs to the shikimate dehydrogenase family. As to quaternary structure, homodimer. It depends on Zn(2+) as a cofactor.

The protein localises to the cytoplasm. It carries out the reaction 7-phospho-2-dehydro-3-deoxy-D-arabino-heptonate = 3-dehydroquinate + phosphate. It catalyses the reaction 3-dehydroquinate = 3-dehydroshikimate + H2O. The catalysed reaction is shikimate + NADP(+) = 3-dehydroshikimate + NADPH + H(+). The enzyme catalyses shikimate + ATP = 3-phosphoshikimate + ADP + H(+). It carries out the reaction 3-phosphoshikimate + phosphoenolpyruvate = 5-O-(1-carboxyvinyl)-3-phosphoshikimate + phosphate. It functions in the pathway metabolic intermediate biosynthesis; chorismate biosynthesis; chorismate from D-erythrose 4-phosphate and phosphoenolpyruvate: step 2/7. It participates in metabolic intermediate biosynthesis; chorismate biosynthesis; chorismate from D-erythrose 4-phosphate and phosphoenolpyruvate: step 3/7. Its pathway is metabolic intermediate biosynthesis; chorismate biosynthesis; chorismate from D-erythrose 4-phosphate and phosphoenolpyruvate: step 4/7. The protein operates within metabolic intermediate biosynthesis; chorismate biosynthesis; chorismate from D-erythrose 4-phosphate and phosphoenolpyruvate: step 5/7. It functions in the pathway metabolic intermediate biosynthesis; chorismate biosynthesis; chorismate from D-erythrose 4-phosphate and phosphoenolpyruvate: step 6/7. The AROM polypeptide catalyzes 5 consecutive enzymatic reactions in prechorismate polyaromatic amino acid biosynthesis. The polypeptide is Pentafunctional AROM polypeptide (Kluyveromyces lactis (strain ATCC 8585 / CBS 2359 / DSM 70799 / NBRC 1267 / NRRL Y-1140 / WM37) (Yeast)).